A 75-amino-acid polypeptide reads, in one-letter code: Alpha-amylase inhibitor Paim-2 (75 aa).

2 disulfide bridges follow: C10-C26 and C44-C72.

Its function is as follows. Inhibits mammalian alpha-amylases specifically but has no action on plant and microbial alpha-amylases. The chain is Alpha-amylase inhibitor Paim-2 from Streptomyces olivaceoviridis (Streptomyces corchorusii).